Consider the following 213-residue polypeptide: MQLPLALCLVCLLVHAAFRVVEGQGWQAFKNDATEIIPELGEYPEPPPELENNKTMNRAENGGRPPHHPFETKDVSEYSCRELHFTRYVTDGPCRSAKPVTELVCSGQCGPARLLPNAIGRGKWWRPSGPDFRCIPDRYRAQRVQLLCPGGAAPRARKVRLVASCKCKRLTRFHNQSELKDFGPEAARPQKGRKPRPRARGAKANQAELENAY.

Residues Met-1–Gly-23 form the signal peptide. Residues Gly-41 to Glu-71 form a disordered region. Asn-53 carries an N-linked (GlcNAc...) asparagine glycan. Intrachain disulfides connect Cys-80/Cys-134, Cys-94/Cys-148, Cys-105/Cys-165, and Cys-109/Cys-167. The CTCK domain maps to Glu-82–Arg-172. The N-linked (GlcNAc...) asparagine glycan is linked to Asn-175. The tract at residues Glu-178–Tyr-213 is disordered. A compositionally biased stretch (basic residues) spans Gln-190–Gly-201.

Belongs to the sclerostin family. Interacts with LRP4 (via the extracellular domain); the interaction facilitates the inhibition of Wnt signaling. Interacts with LRP5 (via the first two YWTD-EGF repeat domains); the interaction inhibits Wnt-mediated signaling. Interacts with LRP6.

It localises to the secreted. Its subcellular location is the extracellular space. It is found in the extracellular matrix. Negative regulator of bone growth that acts through inhibition of Wnt signaling and bone formation. The protein is Sclerostin of Chlorocebus aethiops (Green monkey).